The following is a 143-amino-acid chain: EKC/KEOPS complex subunit LAGE3 (143 aa).

The segment at 1 to 57 (MRDADADAGGGADGGDGRGGHSCRGGVDTAAAPAGGAPPAHAPGPGRDAASAARGSR) is disordered. Residues 30–55 (AAAPAGGAPPAHAPGPGRDAASAARG) show a composition bias toward low complexity.

Belongs to the CTAG/PCC1 family. Component of the EKC/KEOPS complex composed of at least GON7, TP53RK, TPRKB, OSGEP and LAGE3; the whole complex dimerizes. Ubiquitous.

Its subcellular location is the cytoplasm. The protein localises to the nucleus. Its function is as follows. Component of the EKC/KEOPS complex that is required for the formation of a threonylcarbamoyl group on adenosine at position 37 (t(6)A37) in tRNAs that read codons beginning with adenine. The complex is probably involved in the transfer of the threonylcarbamoyl moiety of threonylcarbamoyl-AMP (TC-AMP) to the N6 group of A37. LAGE3 functions as a dimerization module for the complex. The chain is EKC/KEOPS complex subunit LAGE3 from Homo sapiens (Human).